The primary structure comprises 137 residues: Peptide methionine sulfoxide reductase MsrB (137 aa).

The MsrB domain maps to 7–129 (PTENIEKLTD…NSASLNFVDD (123 aa)). 4 residues coordinate Zn(2+): Cys-46, Cys-49, Cys-95, and Cys-98. Catalysis depends on Cys-118, which acts as the Nucleophile.

The protein belongs to the MsrB Met sulfoxide reductase family. It depends on Zn(2+) as a cofactor.

The catalysed reaction is L-methionyl-[protein] + [thioredoxin]-disulfide + H2O = L-methionyl-(R)-S-oxide-[protein] + [thioredoxin]-dithiol. This is Peptide methionine sulfoxide reductase MsrB from Yersinia enterocolitica serotype O:8 / biotype 1B (strain NCTC 13174 / 8081).